The chain runs to 102 residues: Acid shock protein (102 aa).

The signal sequence occupies residues 1–21; the sequence is MKKVLALVVAAAMGLSSAAFA. Residues 21 to 41 show a composition bias toward low complexity; that stretch reads AAETTTTPAPTATTTKAAPAK. The interval 21–102 is disordered; that stretch reads AAETTTTPAP…PAKPAAQPAA (82 aa). A propeptide spanning residues 22–58 is cleaved from the precursor; sequence AETTTTPAPTATTTKAAPAKTTHHKKQHKAAPAQKAQ. Over residues 80–90 the composition is skewed to basic residues; it reads AAKKHAKKHSH. The span at 91–102 shows a compositional bias: low complexity; sequence QQPAKPAAQPAA.

It belongs to the Asr family. Post-translationally, proteolytic processing gives rise to the active protein.

The protein resides in the periplasm. In terms of biological role, required for growth and/or survival at acidic conditions. The protein is Acid shock protein of Escherichia coli (strain K12 / MC4100 / BW2952).